The chain runs to 85 residues: UPF0386 protein VF_0869 (85 aa).

It belongs to the UPF0386 family.

In Aliivibrio fischeri (strain ATCC 700601 / ES114) (Vibrio fischeri), this protein is UPF0386 protein VF_0869.